A 472-amino-acid chain; its full sequence is Aspartyl/glutamyl-tRNA(Asn/Gln) amidotransferase subunit B (472 aa).

The protein belongs to the GatB/GatE family. GatB subfamily. Heterotrimer of A, B and C subunits.

The catalysed reaction is L-glutamyl-tRNA(Gln) + L-glutamine + ATP + H2O = L-glutaminyl-tRNA(Gln) + L-glutamate + ADP + phosphate + H(+). It carries out the reaction L-aspartyl-tRNA(Asn) + L-glutamine + ATP + H2O = L-asparaginyl-tRNA(Asn) + L-glutamate + ADP + phosphate + 2 H(+). Functionally, allows the formation of correctly charged Asn-tRNA(Asn) or Gln-tRNA(Gln) through the transamidation of misacylated Asp-tRNA(Asn) or Glu-tRNA(Gln) in organisms which lack either or both of asparaginyl-tRNA or glutaminyl-tRNA synthetases. The reaction takes place in the presence of glutamine and ATP through an activated phospho-Asp-tRNA(Asn) or phospho-Glu-tRNA(Gln). The sequence is that of Aspartyl/glutamyl-tRNA(Asn/Gln) amidotransferase subunit B from Mycoplasmopsis agalactiae (strain NCTC 10123 / CIP 59.7 / PG2) (Mycoplasma agalactiae).